The sequence spans 195 residues: GTP-dependent dephospho-CoA kinase (195 aa).

D49, V50, D68, E127, and D150 together coordinate GTP.

It belongs to the GTP-dependent DPCK family.

The catalysed reaction is 3'-dephospho-CoA + GTP = GDP + CoA + H(+). The protein operates within cofactor biosynthesis; coenzyme A biosynthesis. Functionally, catalyzes the GTP-dependent phosphorylation of the 3'-hydroxyl group of dephosphocoenzyme A to form coenzyme A (CoA). This is GTP-dependent dephospho-CoA kinase from Methanosarcina mazei (strain ATCC BAA-159 / DSM 3647 / Goe1 / Go1 / JCM 11833 / OCM 88) (Methanosarcina frisia).